The sequence spans 678 residues: Protein CASP (678 aa).

Residues 1–619 (MAANVGSMFQ…LVLSNKMART (619 aa)) lie on the Cytoplasmic side of the membrane. 2 coiled-coil regions span residues 67–450 (LLKS…QDLS) and 502–556 (LSII…FLQS). Phosphoserine is present on serine 586. The chain crosses the membrane as a helical; Anchor for type IV membrane protein span at residues 620–640 (IGFFYTLFLHCLVFLVLYKLA). The Lumenal portion of the chain corresponds to 641–678 (WSESMERDCATFCAKKFADHLHKFHENDNGAAAGDLWQ).

Belongs to the CASP family. In terms of assembly, homodimer; disulfide-linked. Interacts with GOLGA5.

The protein localises to the golgi apparatus membrane. In terms of biological role, may be involved in intra-Golgi retrograde transport. The sequence is that of Protein CASP (CUTL1) from Pongo abelii (Sumatran orangutan).